The chain runs to 401 residues: Phosphoglycerate kinase (401 aa).

Residues 21-23 (DFN), Arg36, 59-62 (HLGR), Arg119, and Arg160 contribute to the substrate site. ATP-binding positions include Lys212, Glu330, and 357–360 (GGDS).

This sequence belongs to the phosphoglycerate kinase family. Monomer.

It is found in the cytoplasm. The enzyme catalyses (2R)-3-phosphoglycerate + ATP = (2R)-3-phospho-glyceroyl phosphate + ADP. Its pathway is carbohydrate degradation; glycolysis; pyruvate from D-glyceraldehyde 3-phosphate: step 2/5. This Limosilactobacillus fermentum (strain NBRC 3956 / LMG 18251) (Lactobacillus fermentum) protein is Phosphoglycerate kinase.